The primary structure comprises 262 residues: ATP synthase subunit a (262 aa).

Transmembrane regions (helical) follow at residues 24-44, 85-105, 129-149, 194-214, and 228-248; these read AVHLDTLFFSLVAGVLFLVVF, IAPLALTIFCWVFIMNAIDLV, DISATLGMSICVFGLILFYTV, LFGNMYAGELIFILIAVMYMA, and LVWAIFHILVITLQAFIFMML.

The protein belongs to the ATPase A chain family. As to quaternary structure, F-type ATPases have 2 components, CF(1) - the catalytic core - and CF(0) - the membrane proton channel. CF(1) has five subunits: alpha(3), beta(3), gamma(1), delta(1), epsilon(1). CF(0) has three main subunits: a(1), b(2) and c(9-12). The alpha and beta chains form an alternating ring which encloses part of the gamma chain. CF(1) is attached to CF(0) by a central stalk formed by the gamma and epsilon chains, while a peripheral stalk is formed by the delta and b chains.

The protein resides in the cell inner membrane. Functionally, key component of the proton channel; it plays a direct role in the translocation of protons across the membrane. This chain is ATP synthase subunit a, found in Haemophilus ducreyi (strain 35000HP / ATCC 700724).